The chain runs to 311 residues: Porphobilinogen deaminase (311 aa).

Cys242 is modified (S-(dipyrrolylmethanemethyl)cysteine).

It belongs to the HMBS family. In terms of assembly, monomer. Dipyrromethane serves as cofactor.

The enzyme catalyses 4 porphobilinogen + H2O = hydroxymethylbilane + 4 NH4(+). It functions in the pathway porphyrin-containing compound metabolism; protoporphyrin-IX biosynthesis; coproporphyrinogen-III from 5-aminolevulinate: step 2/4. In terms of biological role, tetrapolymerization of the monopyrrole PBG into the hydroxymethylbilane pre-uroporphyrinogen in several discrete steps. The sequence is that of Porphobilinogen deaminase (hemC) from Neisseria meningitidis serogroup A / serotype 4A (strain DSM 15465 / Z2491).